The following is a 331-amino-acid chain: tRNA N6-adenosine threonylcarbamoyltransferase (331 aa).

Fe cation contacts are provided by H109, H113, and Y130. Residues 130–134 (YLSGG), D162, D183, and S262 each bind substrate. Fe cation is bound at residue D290.

It belongs to the KAE1 / TsaD family. The cofactor is Fe(2+).

The protein resides in the cytoplasm. The enzyme catalyses L-threonylcarbamoyladenylate + adenosine(37) in tRNA = N(6)-L-threonylcarbamoyladenosine(37) in tRNA + AMP + H(+). Its function is as follows. Required for the formation of a threonylcarbamoyl group on adenosine at position 37 (t(6)A37) in tRNAs that read codons beginning with adenine. Is probably involved in the transfer of the threonylcarbamoyl moiety of threonylcarbamoyl-AMP (TC-AMP) to the N6 group of A37. This Saccharolobus islandicus (strain Y.G.57.14 / Yellowstone #1) (Sulfolobus islandicus) protein is tRNA N6-adenosine threonylcarbamoyltransferase.